A 205-amino-acid polypeptide reads, in one-letter code: Small ribosomal subunit protein uS4 (205 aa).

The tract at residues 27-46 (LNKRDYAPGQHGQRRKGKPS) is disordered. The S4 RNA-binding domain occupies 118-178 (HGHVLVNGKR…HVDHRLMKGT (61 aa)).

Belongs to the universal ribosomal protein uS4 family. Part of the 30S ribosomal subunit. Contacts protein S5. The interaction surface between S4 and S5 is involved in control of translational fidelity.

Its function is as follows. One of the primary rRNA binding proteins, it binds directly to 16S rRNA where it nucleates assembly of the body of the 30S subunit. Functionally, with S5 and S12 plays an important role in translational accuracy. The chain is Small ribosomal subunit protein uS4 from Granulibacter bethesdensis (strain ATCC BAA-1260 / CGDNIH1).